The primary structure comprises 456 residues: Bifunctional protein GlmU (456 aa).

The pyrophosphorylase stretch occupies residues 1–229 (MLNSAMSVVI…ISETDGVNNR (229 aa)). Residues 11–14 (LAAG), K25, Q76, 81–82 (GT), 103–105 (YGD), G140, E154, N169, and N227 each bind UDP-N-acetyl-alpha-D-glucosamine. Residue D105 participates in Mg(2+) binding. N227 serves as a coordination point for Mg(2+). The interval 230 to 250 (LQLSRLERIYQAEQAEKLLLS) is linker. Positions 251–456 (GVMLRDPARF…QGWQRPVKKK (206 aa)) are N-acetyltransferase. 2 residues coordinate UDP-N-acetyl-alpha-D-glucosamine: R333 and K351. The active-site Proton acceptor is the H363. UDP-N-acetyl-alpha-D-glucosamine-binding residues include Y366 and N377. Residues A380, 386–387 (NY), S405, A423, and R440 contribute to the acetyl-CoA site.

It in the N-terminal section; belongs to the N-acetylglucosamine-1-phosphate uridyltransferase family. In the C-terminal section; belongs to the transferase hexapeptide repeat family. In terms of assembly, homotrimer. The cofactor is Mg(2+).

The protein localises to the cytoplasm. It catalyses the reaction alpha-D-glucosamine 1-phosphate + acetyl-CoA = N-acetyl-alpha-D-glucosamine 1-phosphate + CoA + H(+). The enzyme catalyses N-acetyl-alpha-D-glucosamine 1-phosphate + UTP + H(+) = UDP-N-acetyl-alpha-D-glucosamine + diphosphate. It functions in the pathway nucleotide-sugar biosynthesis; UDP-N-acetyl-alpha-D-glucosamine biosynthesis; N-acetyl-alpha-D-glucosamine 1-phosphate from alpha-D-glucosamine 6-phosphate (route II): step 2/2. Its pathway is nucleotide-sugar biosynthesis; UDP-N-acetyl-alpha-D-glucosamine biosynthesis; UDP-N-acetyl-alpha-D-glucosamine from N-acetyl-alpha-D-glucosamine 1-phosphate: step 1/1. The protein operates within bacterial outer membrane biogenesis; LPS lipid A biosynthesis. In terms of biological role, catalyzes the last two sequential reactions in the de novo biosynthetic pathway for UDP-N-acetylglucosamine (UDP-GlcNAc). The C-terminal domain catalyzes the transfer of acetyl group from acetyl coenzyme A to glucosamine-1-phosphate (GlcN-1-P) to produce N-acetylglucosamine-1-phosphate (GlcNAc-1-P), which is converted into UDP-GlcNAc by the transfer of uridine 5-monophosphate (from uridine 5-triphosphate), a reaction catalyzed by the N-terminal domain. The polypeptide is Bifunctional protein GlmU (Salmonella paratyphi A (strain ATCC 9150 / SARB42)).